The following is a 458-amino-acid chain: Bone morphogenetic protein 3 (458 aa).

Residues 1–23 (MAECRPWLVLWVGCCGCLCLALG) form the signal peptide. A propeptide spanning residues 24 to 348 (ELLNDGLLAV…EQTLKKARRK (325 aa)) is cleaved from the precursor. A glycan (N-linked (GlcNAc...) asparagine) is linked at asparagine 107. Disordered stretches follow at residues 244–275 (DSVVSSLHGPHTPLALKPNRKTEKAEQRKKRS) and 303–335 (ERKPYKNLQGRQNEKDKNKKKLRKGSRQKSQTL). The segment covering 320 to 329 (NKKKLRKGSR) has biased composition (basic residues). Intrachain disulfides connect cysteine 356/cysteine 423, cysteine 385/cysteine 455, and cysteine 389/cysteine 457. Asparagine 449 carries N-linked (GlcNAc...) asparagine glycosylation.

It belongs to the TGF-beta family. In terms of assembly, homodimer. Can form heterodimers with ADMP, BMP-2-I and/or BMP-2-II, and DERRIERE.

The protein localises to the secreted. In terms of biological role, dorsalizing factor. Antagonizes mesoderm formation by ventralizing BMPs. This is Bone morphogenetic protein 3 (bmp3) from Xenopus laevis (African clawed frog).